We begin with the raw amino-acid sequence, 155 residues long: Aspartate 1-decarboxylase (155 aa).

The Schiff-base intermediate with substrate; via pyruvic acid role is filled by Ser24. Residue Ser24 is modified to Pyruvic acid (Ser). Thr56 lines the substrate pocket. Tyr57 acts as the Proton donor in catalysis. Residue 72–74 (GAA) coordinates substrate.

It belongs to the PanD family. In terms of assembly, heterooctamer of four alpha and four beta subunits. Requires pyruvate as cofactor. Post-translationally, is synthesized initially as an inactive proenzyme, which is activated by self-cleavage at a specific serine bond to produce a beta-subunit with a hydroxyl group at its C-terminus and an alpha-subunit with a pyruvoyl group at its N-terminus.

The protein localises to the cytoplasm. It catalyses the reaction L-aspartate + H(+) = beta-alanine + CO2. It participates in cofactor biosynthesis; (R)-pantothenate biosynthesis; beta-alanine from L-aspartate: step 1/1. Functionally, catalyzes the pyruvoyl-dependent decarboxylation of aspartate to produce beta-alanine. The polypeptide is Aspartate 1-decarboxylase (Methylocella silvestris (strain DSM 15510 / CIP 108128 / LMG 27833 / NCIMB 13906 / BL2)).